We begin with the raw amino-acid sequence, 313 residues long: uncharacterized protein (313 aa).

9 helical membrane passes run 31-53 (AWGIGVIFPLYSLHALVLGGWLF), 62-84 (LFLFGCVFGMYEAYITKVLWNPY), 104-126 (VFFWHPIFAFILPLLIAEYIYTS), 147-161 (FALLLAALAGLNQSV), 166-185 (SMFWVALLSFFTILTPSFLL), 198-220 (RVLKLLTFALIILYLFWTFALRF), 225-244 (SFSGQLVVWLFYLLLFYLII), 264-282 (FFAACFLVYLTAFLITSSF), and 286-308 (PAAMLFLLAGTAYGTIVFASILI).

The protein localises to the cell membrane. This is an uncharacterized protein from Archaeoglobus fulgidus (strain ATCC 49558 / DSM 4304 / JCM 9628 / NBRC 100126 / VC-16).